A 952-amino-acid chain; its full sequence is Ent-kaur-16-ene synthase (952 aa).

Residues Asp668, Glu672, Asn848, Asp849, Ser852, and Asp856 each contribute to the Mg(2+) site. The short motif at 668 to 672 (DEYME) is the DEXXE motif element.

Belongs to the terpene synthase family. Mg(2+) serves as cofactor.

It carries out the reaction ent-copalyl diphosphate = ent-kaur-16-ene + diphosphate. It catalyses the reaction (2E,6E,10E)-geranylgeranyl diphosphate = ent-copalyl diphosphate. It functions in the pathway plant hormone biosynthesis; gibberellin biosynthesis. Catalyzes the conversion of geranylgeranyl diphosphate to the gibberellin precursor ent-kaurene diphosphate in a two step process. The polypeptide is Ent-kaur-16-ene synthase (cps) (Fusarium fujikuroi (Bakanae and foot rot disease fungus)).